The following is a 413-amino-acid chain: Autophagy-related protein 18 (413 aa).

WD repeat units lie at residues M1 to E36, K69 to T114, P141 to V182, A185 to Q225, and S230 to S269. Residues F226–S230 carry the L/FRRG motif motif. Positions Q263–S289 are enriched in low complexity. The segment at Q263 to G315 is disordered. Positions S296–H305 are enriched in basic and acidic residues. 2 WD repeats span residues K308–K354 and G366–G406.

Belongs to the WD repeat PROPPIN family. As to quaternary structure, component of the PI(3,5)P2 regulatory complex.

It localises to the preautophagosomal structure membrane. The protein localises to the vacuole membrane. It is found in the endosome membrane. In terms of biological role, the PI(3,5)P2 regulatory complex regulates both the synthesis and turnover of phosphatidylinositol 3,5-bisphosphate (PtdIns(3,5)P2). Necessary for proper vacuole morphology. Plays an important role in osmotically-induced vacuole fragmentation. Required for cytoplasm to vacuole transport (Cvt) vesicle formation, pexophagy and starvation-induced autophagy. Involved in correct atg9 trafficking to the pre-autophagosomal structure. Might also be involved in premeiotic DNA replication. The protein is Autophagy-related protein 18 (atg18) of Aspergillus oryzae (strain ATCC 42149 / RIB 40) (Yellow koji mold).